The primary structure comprises 141 residues: Hemoglobin subunit alpha-D (141 aa).

Residues 1 to 141 form the Globin domain; sequence MLTAEDKKLI…VAAVLAEKYR (141 aa). Heme b-binding residues include His58 and His87.

This sequence belongs to the globin family. In terms of assembly, heterotetramer of two alpha-D chains and two beta chains. Red blood cells.

In terms of biological role, involved in oxygen transport from the lung to the various peripheral tissues. The protein is Hemoglobin subunit alpha-D (HBAD) of Cairina moschata (Muscovy duck).